The chain runs to 57 residues: Potassium channel toxin alpha-KTx 8.8 (57 aa).

A signal peptide spans 1-19 (MCRLYAIILIVLVMNVIMT). The propeptide occupies 20–28 (IIPDSKVEV). Cystine bridges form between Cys31–Cys47, Cys34–Cys52, and Cys38–Cys54.

This sequence belongs to the short scorpion toxin superfamily. Potassium channel inhibitor family. Alpha-KTx 08 subfamily. In terms of processing, contains 3 disulfide bonds. In terms of tissue distribution, expressed by the venom gland.

It localises to the secreted. Functionally, selectively inhibits voltage-gated potassium channels rKv1.2/KCNA2 (IC(50)=331 nM) and hKv1.3/KCNA3 (IC(50)=503 nM). Partially inihibts rKv1.6/KCNA6 (IC(50)=9983 nM). This Orthochirus scrobiculosus (Central Asian scorpion) protein is Potassium channel toxin alpha-KTx 8.8.